The sequence spans 177 residues: NAD(P)H-quinone oxidoreductase subunit 6, chloroplastic (177 aa).

The next 5 membrane-spanning stretches (helical) occupy residues 10–30 (FLLV…VLLT), 32–52 (PIFS…FYTP), 61–81 (AQLL…VMFM), 92–112 (LWTV…VSLI), and 152–172 (FFLP…GAIS).

It belongs to the complex I subunit 6 family. NDH is composed of at least 16 different subunits, 5 of which are encoded in the nucleus.

The protein resides in the plastid. It is found in the chloroplast thylakoid membrane. The catalysed reaction is a plastoquinone + NADH + (n+1) H(+)(in) = a plastoquinol + NAD(+) + n H(+)(out). The enzyme catalyses a plastoquinone + NADPH + (n+1) H(+)(in) = a plastoquinol + NADP(+) + n H(+)(out). Functionally, NDH shuttles electrons from NAD(P)H:plastoquinone, via FMN and iron-sulfur (Fe-S) centers, to quinones in the photosynthetic chain and possibly in a chloroplast respiratory chain. The immediate electron acceptor for the enzyme in this species is believed to be plastoquinone. Couples the redox reaction to proton translocation, and thus conserves the redox energy in a proton gradient. The sequence is that of NAD(P)H-quinone oxidoreductase subunit 6, chloroplastic (ndhG) from Ranunculus macranthus (Large buttercup).